A 201-amino-acid polypeptide reads, in one-letter code: L(+)-tartrate dehydratase subunit beta (201 aa).

H37 is an active-site residue.

Belongs to the class-I fumarase family. As to quaternary structure, heterotetramer of two alpha and two beta subunits.

It catalyses the reaction (2R,3R)-tartrate = oxaloacetate + H2O. In Shigella boydii serotype 4 (strain Sb227), this protein is L(+)-tartrate dehydratase subunit beta (ttdB).